The primary structure comprises 165 residues: Protein SprT (165 aa).

Residues 20–163 (ENLAQANLKL…RCVHCGEPLV (144 aa)) form the SprT-like domain. A Zn(2+)-binding site is contributed by histidine 78. Residue glutamate 79 is part of the active site. Histidine 82 lines the Zn(2+) pocket.

Belongs to the SprT family. The cofactor is Zn(2+).

The protein resides in the cytoplasm. This chain is Protein SprT, found in Salmonella arizonae (strain ATCC BAA-731 / CDC346-86 / RSK2980).